The following is a 174-amino-acid chain: Probable NAD(P)H dehydrogenase subunit CRR3, chloroplastic (174 aa).

The transit peptide at methionine 1 to serine 54 directs the protein to the chloroplast. The span at serine 14–aspartate 24 shows a compositional bias: polar residues. The interval serine 14–isoleucine 71 is disordered. Positions proline 30–lysine 45 are enriched in low complexity. Residues valine 53–arginine 64 are compositionally biased toward polar residues. Residues phenylalanine 140–isoleucine 160 traverse the membrane as a helical segment.

It is found in the plastid. It localises to the chloroplast thylakoid membrane. Probable subunit of the chloroplast NAD(P)H dehydrogenase (NDH) complex of the photosynthetic electron transport chain. Required for both formation and activity of NDH. May function in assembly or stabilization of the NDH complex. This Arabidopsis thaliana (Mouse-ear cress) protein is Probable NAD(P)H dehydrogenase subunit CRR3, chloroplastic.